The primary structure comprises 488 residues: Zinc finger protein 345 (488 aa).

15 consecutive C2H2-type zinc fingers follow at residues 62 to 84 (LECK…QRIH), 90 to 112 (YECK…QRIH), 118 to 140 (FECK…QRIH), 146 to 168 (YECK…QIIH), 174 to 196 (YECK…HRIH), 202 to 224 (YECI…RRIH), 230 to 252 (YECK…QRIH), 258 to 280 (YICN…QRIH), 286 to 308 (YVCK…QRIH), 314 to 336 (YECK…QRMH), 342 to 364 (YECK…HRIH), 370 to 392 (YECK…QLIH), 398 to 420 (YECK…QRIH), 426 to 448 (YECK…QRIH), and 454 to 476 (YECK…KKSH).

It belongs to the krueppel C2H2-type zinc-finger protein family.

Its subcellular location is the nucleus. In terms of biological role, may be involved in transcriptional regulation. This is Zinc finger protein 345 (ZNF345) from Homo sapiens (Human).